Reading from the N-terminus, the 381-residue chain is Cytochrome b (381 aa).

Helical transmembrane passes span 34–54 (FGSLLGLCLIIQILTGLFLAM), 78–99 (WLIRNIHANGASLFFICVYLHI), 114–134 (WNIGVILLFLLMATAFVGYVL), and 179–199 (FFAFHFLLPFLILALTIIHLL). Residues His84 and His98 each contribute to the heme b site. His183 and His197 together coordinate heme b. Position 202 (His202) interacts with a ubiquinone. 4 helical membrane passes run 227-247 (YKDLLGFFVMIFFLAVFALFM), 289-309 (LGGVLALLFSIFILMLVPLLH), 321-341 (MTQIFFWLLVANSIILTWIGG), and 348-368 (FIMVGQIASISYFSLFLIIMP).

The protein belongs to the cytochrome b family. As to quaternary structure, the cytochrome bc1 complex contains 3 respiratory subunits (MT-CYB, CYC1 and UQCRFS1), 2 core proteins (UQCRC1 and UQCRC2) and probably 6 low-molecular weight proteins. Heme b is required as a cofactor.

The protein resides in the mitochondrion inner membrane. Functionally, component of the ubiquinol-cytochrome c reductase complex (complex III or cytochrome b-c1 complex) that is part of the mitochondrial respiratory chain. The b-c1 complex mediates electron transfer from ubiquinol to cytochrome c. Contributes to the generation of a proton gradient across the mitochondrial membrane that is then used for ATP synthesis. The chain is Cytochrome b (mt-cyb) from Carcharhinus plumbeus (Sandbar shark).